The primary structure comprises 550 residues: Protein UshA (550 aa).

An N-terminal signal peptide occupies residues 1–25 (MRFSLSTTAAALAVSLAFAPGWAVA). A divalent metal cation-binding residues include Asp41, His43, Asp84, Asn116, His217, His252, and Gln254. Cysteines 258 and 275 form a disulfide. Residues 375–379 (RSKVR) and 498–504 (FNALGGD) each bind substrate.

It belongs to the 5'-nucleotidase family. Co(2+) serves as cofactor.

Its subcellular location is the periplasm. The catalysed reaction is UDP-sugar + H2O = UMP + alpha-D-aldose 1-phosphate.. The enzyme catalyses a ribonucleoside 5'-phosphate + H2O = a ribonucleoside + phosphate. Degradation of external UDP-glucose to uridine monophosphate and glucose-1-phosphate, which can then be used by the cell. This Yersinia enterocolitica serotype O:8 / biotype 1B (strain NCTC 13174 / 8081) protein is Protein UshA (ushA).